The following is a 144-amino-acid chain: Eukaryotic translation initiation factor 1A (144 aa).

Basic residues predominate over residues 1–15; sequence MPKNKGKGGKNRRRG. Disordered regions lie at residues 1–26 and 114–144; these read MPKN…KREL and KINE…IDDI. Over residues 16–26 the composition is skewed to basic and acidic residues; sequence KNENESEKREL. One can recognise an S1-like domain in the interval 22–96; it reads EKRELVFKED…NKADVILKYN (75 aa). Over residues 124 to 144 the composition is skewed to acidic residues; the sequence is GDDDEIQFDDIGDDDEDIDDI.

This sequence belongs to the eIF-1A family. Component of the 43S pre-initiation complex (43S PIC), which is composed of the 40S ribosomal subunit, EIF1, eIF1A (EIF1AX), eIF3 complex, EIF5 and eIF2-GTP-initiator tRNA complex (eIF2 ternary complex). Interacts with EIF5; this interaction contributes to the maintenance of EIF1 within the open 43S PIC. Interacts through its C-terminal domain (CTD) with the CTD of EIF5B; from the location of the start codon by the 43S complex until the formation of the 80S complex.

The protein localises to the cytoplasm. Functionally, component of the 43S pre-initiation complex (43S PIC), which binds to the mRNA cap-proximal region, scans mRNA 5'-untranslated region, and locates the initiation codon. This protein enhances formation of the cap-proximal complex. Together with EIF1, facilitates scanning, start codon recognition, promotion of the assembly of 48S complex at the initiation codon (43S PIC becomes 48S PIC after the start codon is reached), and dissociation of aberrant complexes. After start codon location, together with EIF5B orients the initiator methionine-tRNA in a conformation that allows 60S ribosomal subunit joining to form the 80S initiation complex. Is released after 80S initiation complex formation, just after GTP hydrolysis by EIF5B, and before release of EIF5B. Its globular part is located in the A site of the 40S ribosomal subunit. Its interaction with EIF5 during scanning contribute to the maintenance of EIF1 within the open 43S PIC. In contrast to yeast orthologs, does not bind EIF1. The chain is Eukaryotic translation initiation factor 1A (Eif1a) from Mus musculus (Mouse).